A 428-amino-acid chain; its full sequence is UDP-N-acetylglucosamine 1-carboxyvinyltransferase 2 (428 aa).

22–23 lines the phosphoenolpyruvate pocket; sequence KN. R92 is a UDP-N-acetyl-alpha-D-glucosamine binding site. C116 acts as the Proton donor in catalysis. Residue C116 is modified to 2-(S-cysteinyl)pyruvic acid O-phosphothioketal. Residues 121-125, D304, and I326 contribute to the UDP-N-acetyl-alpha-D-glucosamine site; that span reads RPIDQ.

It belongs to the EPSP synthase family. MurA subfamily.

It localises to the cytoplasm. The enzyme catalyses phosphoenolpyruvate + UDP-N-acetyl-alpha-D-glucosamine = UDP-N-acetyl-3-O-(1-carboxyvinyl)-alpha-D-glucosamine + phosphate. It participates in cell wall biogenesis; peptidoglycan biosynthesis. Its function is as follows. Cell wall formation. Adds enolpyruvyl to UDP-N-acetylglucosamine. The protein is UDP-N-acetylglucosamine 1-carboxyvinyltransferase 2 of Geobacillus kaustophilus (strain HTA426).